The primary structure comprises 675 residues: Metal-nicotianamine transporter YSL3 (675 aa).

Transmembrane regions (helical) follow at residues 42-62 (ITFRGIVASLIIGIIYSVIVM), 66-86 (LTTGLVPNLNVSAALLAFVFL), 114-134 (CAVACYSIAVGGGFGSYLLGL), 159-179 (GIGWMTAFLFFTCFVGLLALV), 219-239 (VFGFVKYFSFSFIWAFFQWFF), 280-300 (IVNISLLFGAVLSWGIMWPLI), 325-345 (VFISISLILGDGLYQFIKILF), 386-406 (IPLWVAAVGYAAFSVVSIIAI), 408-428 (IMFPELKWYFIVVAYMLAPSL), 450-470 (VALFILAAMAGKQNGVVAGLV), 504-524 (VSQAIGTAIGCVVAPLTFFLF), 556-576 (FSALPQHCLQLCYGFFAFAVA), 602-622 (FLVGGYFAIDMCVGSLIVFAW), and 630-650 (AGLMVPAVASGLICGDGLWIL).

This sequence belongs to the YSL (TC 2.A.67.2) family. Expressed in leaves, anthers and pollen grains. Restricted to the vasculature.

The protein localises to the membrane. May be involved in the lateral transport of nicotianamine-chelated metals in the vasculature. In Arabidopsis thaliana (Mouse-ear cress), this protein is Metal-nicotianamine transporter YSL3 (YSL3).